The chain runs to 184 residues: Large ribosomal subunit protein uL6 (184 aa).

This sequence belongs to the universal ribosomal protein uL6 family. Part of the 50S ribosomal subunit.

Its function is as follows. This protein binds to the 23S rRNA, and is important in its secondary structure. It is located near the subunit interface in the base of the L7/L12 stalk, and near the tRNA binding site of the peptidyltransferase center. The chain is Large ribosomal subunit protein uL6 from Desulfitobacterium hafniense (strain Y51).